We begin with the raw amino-acid sequence, 156 residues long: Deoxyuridine 5'-triphosphate nucleotidohydrolase (156 aa).

Substrate contacts are provided by residues 76-78, asparagine 89, 93-95, and lysine 103; these read RSG and TVD.

This sequence belongs to the dUTPase family. The cofactor is Mg(2+).

The catalysed reaction is dUTP + H2O = dUMP + diphosphate + H(+). It functions in the pathway pyrimidine metabolism; dUMP biosynthesis; dUMP from dCTP (dUTP route): step 2/2. Its function is as follows. This enzyme is involved in nucleotide metabolism: it produces dUMP, the immediate precursor of thymidine nucleotides and it decreases the intracellular concentration of dUTP so that uracil cannot be incorporated into DNA. The protein is Deoxyuridine 5'-triphosphate nucleotidohydrolase of Rhizobium johnstonii (strain DSM 114642 / LMG 32736 / 3841) (Rhizobium leguminosarum bv. viciae).